A 936-amino-acid chain; its full sequence is MAGENSDNEPSSPASPSSAGFNTDQLPISTSQNSENFSDEEEAAVDTQVIRDEPDEAEDEEEEEGEDLFNDTFMNDYRKMDENDQYESNGIDDSVDDERDLGQAMLDRRAADADLDARENRLANRKLPHLLHDNDSDDWNYRPSKRSRTTVPPRGNGGDPDGNPPSSPGVSQPDISMTDQTDDYQDEDDNDDEAEFEMYRIQGTLREWVMRDEVRRFIAKKFKDFLLTYVKPKNENGDIEYVRLINEMVSANKCSLEIDYKEFIHVHPNIAIWLADAPQPVLEVMEEVSEKVIFDLHPNYKNIHTKIYVRVTNLPVNDQIRNIRQIHLNTMIRIGGVVTRRSGVFPQLQQVKYDCNKCGAVLGPFFQNSYSEVKVGSCSECQSKGPFTVNVEQTIYRNYQKLTIQESPGTVPAGRLPRHKEVILLNDLIDCARPGEEIEVTGIYTNNFDLSLNTKNGFPVFATVVEANYVTKKQDLFSAYKLTQEDKTQIEELSKDPRIVERIIKSIAPSIYGHEDIKTALALAMFGGQEKNIKGKHRLRGDINVLLLGDPGTAKSQFLKYVEKTGQRAVYTTGKGASAVGLTAAVHKDPVTREWTLEGGALVLADRGICLIDEFDKMNDQDRVSIHEAMEQQSISISKAGIVTSLQARCSVIAAANPVGGRYDSSKSFAQNVELTDPILSRFDILCVVKDVVDPVTDEMLAEFVVNSHFKSQPKGGKMEDSDPEDGIQGSSGSTDPEVLPQNLLKKYLTYSKLYVFPKLGELDAKKLETVYANLRRESMNGQGVSIATRHLESMIRMSEAHARMHLRQYVTEEDVNMAIRVLLDSFISTQKFGVQRTLRESFKRYITYKKDFNSLLLVLLKELVKNALKFEEIISGSNSGLPTIEVKIEELQTKAKEYDIADLRPFFSSTDFSKAHFELDHGRGMIKCPKRLITW.

Disordered stretches follow at residues 1 to 105 (MAGE…GQAM) and 126 to 190 (KLPH…EDDN). Residues 10-19 (PSSPASPSSA) are compositionally biased toward low complexity. The span at 20-36 (GFNTDQLPISTSQNSEN) shows a compositional bias: polar residues. 2 stretches are compositionally biased toward acidic residues: residues 53–69 (EPDE…EDLF) and 180–190 (QTDDYQDEDDN). The C4-type zinc-finger motif lies at 355–381 (CNKCGAVLGPFFQNSYSEVKVGSCSEC). The region spanning 499 to 705 (IVERIIKSIA…VTDEMLAEFV (207 aa)) is the MCM domain. Residue 549-556 (GDPGTAKS) coordinates ATP. The Arginine finger motif lies at 681 to 684 (SRFD). Positions 711 to 739 (KSQPKGGKMEDSDPEDGIQGSSGSTDPEV) are disordered.

It belongs to the MCM family. As to quaternary structure, component of the minichromosome maintenance (MCM) complex, a heterotetramer composed of MCM2, MCM3, MCM4, MCM5, MCM6 and MCM7. Interacts with ETG1 and the replication-associated protein of the geminivirus mungbean yellow mosaic virus (MYMV). In terms of tissue distribution, expressed in root apical meristem, lateral root meristem primordia, leaf primordia, shoot apical meristem and flower buds.

It is found in the nucleus. The catalysed reaction is ATP + H2O = ADP + phosphate + H(+). Its function is as follows. Probable component of the MCM2-7 complex (MCM complex) that may function as a DNA helicase and which is essential to undergo a single round of replication initiation and elongation per cell cycle in eukaryotic cells. May play a crucial role in the control of de-differentiation and cell proliferation processes required for lateral root formation. Is essential for embryo development. Is involved in the geminivirus mungbean yellow mosaic virus (MYMV) DNA replication, presumably in conjunction with other host factors. The sequence is that of DNA replication licensing factor MCM2 (MCM2) from Arabidopsis thaliana (Mouse-ear cress).